The chain runs to 1103 residues: Detocs histidine-protein kinase DtcA (1103 aa).

Position 758 is a phosphohistidine; by autocatalysis (His-758). Residues 818-851 (TIINDAKEKVHINTGEFIESAKVFNYAIEIEFVE) form a TPR repeat.

In terms of processing, autophosphorylated.

The catalysed reaction is ATP + protein L-histidine = ADP + protein N-phospho-L-histidine.. Sensor-kinase member of the two-component regulatory system Detocs that confers resistance to bacteriophage. When the system (DtcA-DtcB-DtcC) is expressed in a susceptible E.coli (strain MG1655) it confers resistance to bacteriophages T2, T4, T5, T7, SECphi4, SECphi6 and SECphi27; the level of resistance varies, resistance to T2, T7 and SECphi4 is not very high. DtcA (this subunit) probably autophosphorylates upon sensing viral infection, and subsequently transfers the phosphate signal to DtcC which activates it, leading to an antiviral defense; DtcB may scavenge phosphorylation signals from accidental activation of DtcA. In Enterobacter cloacae (strain JD6301), this protein is Detocs histidine-protein kinase DtcA.